Reading from the N-terminus, the 644-residue chain is Methionine--tRNA ligase (644 aa).

The 'HIGH' region signature appears at 14 to 24; the sequence is YYPSAKLHIGN. Zn(2+) contacts are provided by C129, C132, C146, and C149. The short motif at 299-303 is the 'KMSKS' region element; that stretch reads KMSKS. ATP is bound at residue K302. The tRNA-binding domain maps to 542–644; that stretch reads DVDKLDLRVV…EDIPTGSIVR (103 aa).

It belongs to the class-I aminoacyl-tRNA synthetase family. MetG type 2A subfamily. As to quaternary structure, homodimer. Requires Zn(2+) as cofactor.

The protein resides in the cytoplasm. It catalyses the reaction tRNA(Met) + L-methionine + ATP = L-methionyl-tRNA(Met) + AMP + diphosphate. Its function is as follows. Is required not only for elongation of protein synthesis but also for the initiation of all mRNA translation through initiator tRNA(fMet) aminoacylation. The polypeptide is Methionine--tRNA ligase (metG) (Clostridium acetobutylicum (strain ATCC 824 / DSM 792 / JCM 1419 / IAM 19013 / LMG 5710 / NBRC 13948 / NRRL B-527 / VKM B-1787 / 2291 / W)).